Consider the following 488-residue polypeptide: UDP-N-acetylmuramate--L-alanine ligase (488 aa).

127–133 (GTHGKTT) is an ATP binding site.

It belongs to the MurCDEF family.

The protein localises to the cytoplasm. The enzyme catalyses UDP-N-acetyl-alpha-D-muramate + L-alanine + ATP = UDP-N-acetyl-alpha-D-muramoyl-L-alanine + ADP + phosphate + H(+). The protein operates within cell wall biogenesis; peptidoglycan biosynthesis. Cell wall formation. In Shewanella putrefaciens (strain CN-32 / ATCC BAA-453), this protein is UDP-N-acetylmuramate--L-alanine ligase.